We begin with the raw amino-acid sequence, 552 residues long: HTH-type transcriptional regulator SgrR (552 aa).

Residues 1–116 form the HTH marR-type domain; that stretch reads MPSGRLQQQF…LISHLGRSFR (116 aa). Positions 26–49 form a DNA-binding region, H-T-H motif; it reads LNELADLLNCSRRHMRTLLNTMQA. Residues 163–493 form a solute-binding region; sequence ELEADIAHHW…RDWQDDAAQW (331 aa).

Activates the small RNA gene sgrS under glucose-phosphate stress conditions as well as yfdZ. Represses its own transcription under both stress and non-stress conditions. Might act as a sensor of the intracellular accumulation of phosphoglucose by binding these molecules in its C-terminal solute-binding domain. The protein is HTH-type transcriptional regulator SgrR of Salmonella choleraesuis (strain SC-B67).